Reading from the N-terminus, the 393-residue chain is Formate-dependent phosphoribosylglycinamide formyltransferase (393 aa).

Residues 22-23 (EL) and Glu-82 each bind N(1)-(5-phospho-beta-D-ribosyl)glycinamide. Residues Arg-114, Lys-155, 160–165 (SSGKGQ), 195–198 (EGFI), and Glu-203 each bind ATP. The region spanning 119–308 (RLAAEELDLP…QFALHARAIL (190 aa)) is the ATP-grasp domain. Residues Glu-267 and Glu-279 each contribute to the Mg(2+) site. Residues Asp-286, Lys-356, and 363-364 (RR) contribute to the N(1)-(5-phospho-beta-D-ribosyl)glycinamide site.

The protein belongs to the PurK/PurT family. As to quaternary structure, homodimer.

The enzyme catalyses N(1)-(5-phospho-beta-D-ribosyl)glycinamide + formate + ATP = N(2)-formyl-N(1)-(5-phospho-beta-D-ribosyl)glycinamide + ADP + phosphate + H(+). It functions in the pathway purine metabolism; IMP biosynthesis via de novo pathway; N(2)-formyl-N(1)-(5-phospho-D-ribosyl)glycinamide from N(1)-(5-phospho-D-ribosyl)glycinamide (formate route): step 1/1. Its function is as follows. Involved in the de novo purine biosynthesis. Catalyzes the transfer of formate to 5-phospho-ribosyl-glycinamide (GAR), producing 5-phospho-ribosyl-N-formylglycinamide (FGAR). Formate is provided by PurU via hydrolysis of 10-formyl-tetrahydrofolate. The sequence is that of Formate-dependent phosphoribosylglycinamide formyltransferase from Pseudomonas putida (strain GB-1).